Reading from the N-terminus, the 467-residue chain is UDP-N-acetylmuramoylalanine--D-glutamate ligase (467 aa).

121–127 (GTNGKST) serves as a coordination point for ATP.

It belongs to the MurCDEF family.

It localises to the cytoplasm. It catalyses the reaction UDP-N-acetyl-alpha-D-muramoyl-L-alanine + D-glutamate + ATP = UDP-N-acetyl-alpha-D-muramoyl-L-alanyl-D-glutamate + ADP + phosphate + H(+). It participates in cell wall biogenesis; peptidoglycan biosynthesis. Functionally, cell wall formation. Catalyzes the addition of glutamate to the nucleotide precursor UDP-N-acetylmuramoyl-L-alanine (UMA). The chain is UDP-N-acetylmuramoylalanine--D-glutamate ligase from Brucella abortus (strain 2308).